The sequence spans 661 residues: UvrABC system protein B (661 aa).

The Helicase ATP-binding domain occupies lysine 25–arginine 182. Glycine 38 to threonine 45 lines the ATP pocket. Residues tyrosine 91–isoleucine 114 carry the Beta-hairpin motif. The Helicase C-terminal domain maps to glutamine 430–isoleucine 592. One can recognise a UVR domain in the interval lysine 621–alanine 656.

It belongs to the UvrB family. Forms a heterotetramer with UvrA during the search for lesions. Interacts with UvrC in an incision complex.

The protein localises to the cytoplasm. The UvrABC repair system catalyzes the recognition and processing of DNA lesions. A damage recognition complex composed of 2 UvrA and 2 UvrB subunits scans DNA for abnormalities. Upon binding of the UvrA(2)B(2) complex to a putative damaged site, the DNA wraps around one UvrB monomer. DNA wrap is dependent on ATP binding by UvrB and probably causes local melting of the DNA helix, facilitating insertion of UvrB beta-hairpin between the DNA strands. Then UvrB probes one DNA strand for the presence of a lesion. If a lesion is found the UvrA subunits dissociate and the UvrB-DNA preincision complex is formed. This complex is subsequently bound by UvrC and the second UvrB is released. If no lesion is found, the DNA wraps around the other UvrB subunit that will check the other stand for damage. The polypeptide is UvrABC system protein B (Rickettsia bellii (strain RML369-C)).